The sequence spans 132 residues: Small ribosomal subunit protein uS12 (132 aa).

Asp89 is modified (3-methylthioaspartic acid).

The protein belongs to the universal ribosomal protein uS12 family. Part of the 30S ribosomal subunit. Contacts proteins S8 and S17. May interact with IF1 in the 30S initiation complex.

Its function is as follows. With S4 and S5 plays an important role in translational accuracy. Functionally, interacts with and stabilizes bases of the 16S rRNA that are involved in tRNA selection in the A site and with the mRNA backbone. Located at the interface of the 30S and 50S subunits, it traverses the body of the 30S subunit contacting proteins on the other side and probably holding the rRNA structure together. The combined cluster of proteins S8, S12 and S17 appears to hold together the shoulder and platform of the 30S subunit. The polypeptide is Small ribosomal subunit protein uS12 (Campylobacter curvus (strain 525.92)).